A 962-amino-acid chain; its full sequence is Glutamate receptor 1 (962 aa).

The first 25 residues, 1-25, serve as a signal peptide directing secretion; it reads MFSSFSFLNMFGVLFTVFNLTVVQP. The Extracellular portion of the chain corresponds to 26 to 591; it reads YPSHIIIKSF…SVFSFMQPLS (566 aa). 6 N-linked (GlcNAc...) asparagine glycosylation sites follow: N190, N220, N275, N333, N441, and N482. A helical transmembrane segment spans residues 592–612; the sequence is TEIWMYIIFAYIGVSVVIFLV. The Cytoplasmic segment spans residues 613–668; it reads SRFSPYEWRVEETSRGGFTISNDFSVYNCLWFTLAAFMQQGTDILPRSISGRIASS. The helical transmembrane segment at 669–689 threads the bilayer; that stretch reads AWWFFTMIIVSSYTANLAAFL. At 690 to 855 the chain is on the extracellular side; the sequence is TLEKMQAPIE…GSSASLNLSK (166 aa). N852 carries N-linked (GlcNAc...) asparagine glycosylation. Residues 856 to 876 form a helical membrane-spanning segment; that stretch reads VAGIFYILMGGMVISMLAALG. Over 877-962 the chain is Cytoplasmic; that stretch reads EFLYRSRIEA…PANTLYNTAV (86 aa).

The protein belongs to the glutamate-gated ion channel (TC 1.A.10.1) family. Interacts with sol-1. Interacts with cni-1; the interaction negatively regulates export of glr-1 from the endoplasmic reticulum to synapses. Interacts with usp-46; the interaction results in deubiquitination of glr-1. Post-translationally, ubiquitinated. Deubiquitinated by usp-46 which prevents its degradation. Glycosylated. In terms of tissue distribution, command interneurons of the locomotory control circuit (AIB, AVA, AVB, AVD, AVE and PVC) and motor neurons (RMD, RIM, SMD, AVG, PVQ and URY).

It is found in the postsynaptic cell membrane. Its subcellular location is the endoplasmic reticulum. It localises to the synapse. The protein localises to the cell membrane. The protein resides in the recycling endosome. It is found in the cell projection. Its subcellular location is the dendrite. It localises to the perikaryon. In terms of biological role, non-NMDA (N-methyl-D-aspartate) ionotropic glutamate receptor. L-glutamate acts as an excitatory neurotransmitter at many synapses in the central nervous system. The postsynaptic actions of glutamate are mediated by a variety of receptors that are named according to their selective agonists. May contribute to a sensory discrimination between mechanical and chemical stimuli. Plays a role in controlling movement in response to environmental cues such as food availability and mechanosensory stimulation such as the nose touch response. In AIB interneurons, promotes omega turns, a movement that frequently follows backwards locomotion or 'reversals' in response to environmental cues while possibly playing an inhibitory role in alternative neurons to inhibit omega turns. This Caenorhabditis elegans protein is Glutamate receptor 1.